Reading from the N-terminus, the 527-residue chain is Probable T-complex protein 1 subunit beta (527 aa).

The protein belongs to the TCP-1 chaperonin family. In terms of assembly, heterooligomeric complex of about 850 to 900 kDa that forms two stacked rings, 12 to 16 nm in diameter.

Its subcellular location is the cytoplasm. Functionally, molecular chaperone; assists the folding of proteins upon ATP hydrolysis. Known to play a role, in vitro, in the folding of actin and tubulin. The sequence is that of Probable T-complex protein 1 subunit beta (cct2) from Schizosaccharomyces pombe (strain 972 / ATCC 24843) (Fission yeast).